The sequence spans 360 residues: Alanine racemase (360 aa).

Residue Lys33 is the Proton acceptor; specific for D-alanine of the active site. Lys33 bears the N6-(pyridoxal phosphate)lysine mark. Arg129 is a binding site for substrate. The active-site Proton acceptor; specific for L-alanine is the Tyr253. Position 301 (Met301) interacts with substrate.

The protein belongs to the alanine racemase family. Requires pyridoxal 5'-phosphate as cofactor.

The catalysed reaction is L-alanine = D-alanine. It participates in amino-acid biosynthesis; D-alanine biosynthesis; D-alanine from L-alanine: step 1/1. Its function is as follows. Catalyzes the interconversion of L-alanine and D-alanine. May also act on other amino acids. In Xanthomonas campestris pv. campestris (strain 8004), this protein is Alanine racemase (alr).